Here is a 446-residue protein sequence, read N- to C-terminus: Putative zinc metalloprotease NMA0084 (446 aa).

His-18 contacts Zn(2+). Glu-19 is an active-site residue. Residue His-22 participates in Zn(2+) binding. Helical transmembrane passes span 93–115 (IAIVAAGPLTNLALAVLLYGLSF), 376–398 (FLALVSISLGVLNLLPVPVLDGG), and 419–438 (NIGLRFGLALMMLMMAVAFF). Residues 100–181 (PLTNLALAVL…KVAVGVQTAS (82 aa)) form the PDZ domain.

This sequence belongs to the peptidase M50B family. The cofactor is Zn(2+).

It is found in the cell inner membrane. The chain is Putative zinc metalloprotease NMA0084 from Neisseria meningitidis serogroup A / serotype 4A (strain DSM 15465 / Z2491).